The sequence spans 265 residues: Glutamate racemase (265 aa).

Substrate contacts are provided by residues 12-13 (DS) and 44-45 (YG). The active-site Proton donor/acceptor is the Cys75. Position 76–77 (76–77 (NT)) interacts with substrate. Cys183 acts as the Proton donor/acceptor in catalysis. 184–185 (TH) is a binding site for substrate.

This sequence belongs to the aspartate/glutamate racemases family.

The enzyme catalyses L-glutamate = D-glutamate. Its pathway is cell wall biogenesis; peptidoglycan biosynthesis. Its function is as follows. Provides the (R)-glutamate required for cell wall biosynthesis. The chain is Glutamate racemase from Carboxydothermus hydrogenoformans (strain ATCC BAA-161 / DSM 6008 / Z-2901).